A 231-amino-acid chain; its full sequence is Ribonuclease HII (231 aa).

Residues glutamate 38–leucine 227 form the RNase H type-2 domain. 3 residues coordinate a divalent metal cation: aspartate 44, glutamate 45, and aspartate 136.

Belongs to the RNase HII family. It depends on Mn(2+) as a cofactor. The cofactor is Mg(2+).

The protein resides in the cytoplasm. It carries out the reaction Endonucleolytic cleavage to 5'-phosphomonoester.. In terms of biological role, endonuclease that specifically degrades the RNA of RNA-DNA hybrids. This is Ribonuclease HII from Carboxydothermus hydrogenoformans (strain ATCC BAA-161 / DSM 6008 / Z-2901).